Reading from the N-terminus, the 395-residue chain is MVDGRKPHINVGTIGHVDHGKTTLTAALTTVLAKRLSGEGNKSVKYDEIDKAPEEKARGITISTAHVEYETENRHYAHVDCPGHADYIKNMITGAAQMDAAILVVSATDGAMPQTREHILLAKQVGVKDIVVWMNKCDVVDDEEMLSLVEMEIRELLTKYGYPGDDIDVVKGSAVKALEEESADGVWSEKIMELMNALEKIDLPIREKDKPFLMSIEDVFSIPGRGTVVTGRIERGVIKVGDKIDIVGLRDIQSTVCTGVEMFHKALDAGEAGDNAGILLRGIKKEDVERGQVLSAPGQIHSYKGFKAEVYVLKKEEGGRHTPFFSNYQPQFYVRTTDVTGNIKLPDGVEMVMPGDNISIEVNLDKPVAIDKGLRFAIREGGRTIGSGIITEILE.

The tr-type G domain occupies 6-205; that stretch reads KPHINVGTIG…NALEKIDLPI (200 aa). The G1 stretch occupies residues 15–22; the sequence is GHVDHGKT. GTP is bound at residue 15–22; that stretch reads GHVDHGKT. Position 22 (T22) interacts with Mg(2+). The segment at 59–63 is G2; it reads GITIS. A G3 region spans residues 80 to 83; it reads DCPG. Residues 80 to 84 and 135 to 138 each bind GTP; these read DCPGH and NKCD. Positions 135-138 are G4; sequence NKCD. Residues 173–175 are G5; it reads SAV.

It belongs to the TRAFAC class translation factor GTPase superfamily. Classic translation factor GTPase family. EF-Tu/EF-1A subfamily. As to quaternary structure, monomer.

It localises to the cytoplasm. It carries out the reaction GTP + H2O = GDP + phosphate + H(+). GTP hydrolase that promotes the GTP-dependent binding of aminoacyl-tRNA to the A-site of ribosomes during protein biosynthesis. In Ehrlichia ruminantium (strain Gardel), this protein is Elongation factor Tu.